The chain runs to 610 residues: T-cell immunomodulatory protein (610 aa).

The signal sequence occupies residues 1 to 32 (MAAGLLPSARAVLALLFLGLALLSVGPAPAQA). 8 N-linked (GlcNAc...) asparagine glycosylation sites follow: Asn-35, Asn-94, Asn-123, Asn-138, Asn-145, Asn-150, Asn-175, and Asn-241. The FG-GAP 1; atypical repeat unit spans residues 98 to 135 (LVTSVVPGDYDGDSQMDVLLTYFPQNHSNNELGAVIFW). The FG-GAP 2; atypical repeat unit spans residues 153-183 (FHDQPLIMDFNGDLIPDVFAITNESSQPQIL). One copy of the FG-GAP 3; atypical repeat lies at 256–291 (VVGQSAFADFDGDGHMDHLLPGCEDKDCQKSAIYLM). Asn-351, Asn-369, and Asn-480 each carry an N-linked (GlcNAc...) asparagine glycan. A helical transmembrane segment spans residues 564-584 (IVLLTAVALTGVCVFILAIIA).

It belongs to the TIP family. In terms of assembly, interacts with RUVBL1, RUVBL2 and alpha-tubulin.

The protein resides in the secreted. It localises to the cell membrane. Modulator of T-cell function. Has a protective effect in graft versus host disease model. This chain is T-cell immunomodulatory protein, found in Rattus norvegicus (Rat).